A 517-amino-acid chain; its full sequence is MFS-type transporter avaJ (517 aa).

The segment covering 1–12 (MTSPEHSEDERQ) has biased composition (basic and acidic residues). The interval 1–28 (MTSPEHSEDERQPLLTKPSGPDESQSGF) is disordered. A helical transmembrane segment spans residues 40–60 (AMWLLPMYTLYAITAGSLIIP). The N-linked (GlcNAc...) asparagine glycan is linked to Asn63. Transmembrane regions (helical) follow at residues 103–123 (IYGT…LMGF), 131–151 (PILL…LAAL), 161–181 (WLLV…ATTA), 204–224 (AAFT…LSVF), and 230–250 (AYWL…LALP). N-linked (GlcNAc...) asparagine glycosylation occurs at Asn265. 5 helical membrane passes run 299 to 319 (MYIV…LVPL), 338 to 358 (FLTG…PLFM), 391 to 411 (LLLQ…LGVI), 442 to 462 (VLLG…PSGM), and 476 to 496 (ALFA…MFIG). N-linked (GlcNAc...) asparagine glycosylation is found at Asn497 and Asn512.

The protein belongs to the major facilitator superfamily. TCR/Tet family.

It is found in the membrane. It functions in the pathway secondary metabolite biosynthesis. Functionally, MFS-type transporter; part of the cluster that mediates the biosynthesis of a highly modified cyclo-arginine-tryptophan dipeptide (cRW). The sequence is that of MFS-type transporter avaJ from Aspergillus versicolor.